Here is a 343-residue protein sequence, read N- to C-terminus: Probable 3',5'-cyclic-nucleotide phosphodiesterase (343 aa).

The first 36 residues, Met1 to Ala36, serve as a signal peptide directing secretion.

It belongs to the cyclic nucleotide phosphodiesterase class-II family.

It localises to the periplasm. The enzyme catalyses a nucleoside 3',5'-cyclic phosphate + H2O = a nucleoside 5'-phosphate + H(+). This chain is Probable 3',5'-cyclic-nucleotide phosphodiesterase (cpdP), found in Yersinia pestis.